Here is a 157-residue protein sequence, read N- to C-terminus: SsrA-binding protein (157 aa).

Residues K131–G157 are disordered. The span at Q132 to G157 shows a compositional bias: basic and acidic residues.

Belongs to the SmpB family.

It is found in the cytoplasm. In terms of biological role, required for rescue of stalled ribosomes mediated by trans-translation. Binds to transfer-messenger RNA (tmRNA), required for stable association of tmRNA with ribosomes. tmRNA and SmpB together mimic tRNA shape, replacing the anticodon stem-loop with SmpB. tmRNA is encoded by the ssrA gene; the 2 termini fold to resemble tRNA(Ala) and it encodes a 'tag peptide', a short internal open reading frame. During trans-translation Ala-aminoacylated tmRNA acts like a tRNA, entering the A-site of stalled ribosomes, displacing the stalled mRNA. The ribosome then switches to translate the ORF on the tmRNA; the nascent peptide is terminated with the 'tag peptide' encoded by the tmRNA and targeted for degradation. The ribosome is freed to recommence translation, which seems to be the essential function of trans-translation. The chain is SsrA-binding protein from Methylorubrum populi (strain ATCC BAA-705 / NCIMB 13946 / BJ001) (Methylobacterium populi).